The primary structure comprises 118 residues: Ribonuclease P protein component (118 aa).

Belongs to the RnpA family. As to quaternary structure, consists of a catalytic RNA component (M1 or rnpB) and a protein subunit.

The enzyme catalyses Endonucleolytic cleavage of RNA, removing 5'-extranucleotides from tRNA precursor.. Its function is as follows. RNaseP catalyzes the removal of the 5'-leader sequence from pre-tRNA to produce the mature 5'-terminus. It can also cleave other RNA substrates such as 4.5S RNA. The protein component plays an auxiliary but essential role in vivo by binding to the 5'-leader sequence and broadening the substrate specificity of the ribozyme. In Shewanella amazonensis (strain ATCC BAA-1098 / SB2B), this protein is Ribonuclease P protein component.